A 157-amino-acid chain; its full sequence is MSLLIDIVDETNSVSADALQEVEKLLQFAAEKEGVQDQAEVSVTIVTNEEIREINRDYRGKDTPTDVISFALEEEGEDEVEIVGADMPPVLGDIIISADRTKEQAEEYGHSFMRELGFLAVHGFLHLLGYDHMTKEEEEEMFSKQKDLLDEYGLTRS.

Positions 122, 126, and 132 each coordinate Zn(2+).

This sequence belongs to the endoribonuclease YbeY family. Requires Zn(2+) as cofactor.

The protein localises to the cytoplasm. Functionally, single strand-specific metallo-endoribonuclease involved in late-stage 70S ribosome quality control and in maturation of the 3' terminus of the 16S rRNA. The chain is Endoribonuclease YbeY from Bacillus velezensis (strain DSM 23117 / BGSC 10A6 / LMG 26770 / FZB42) (Bacillus amyloliquefaciens subsp. plantarum).